A 554-amino-acid polypeptide reads, in one-letter code: Hydroxylamine reductase (554 aa).

[2Fe-2S] cluster contacts are provided by Cys3, Cys6, Cys18, and Cys25. Hybrid [4Fe-2O-2S] cluster is bound by residues His252, Glu276, Cys320, Cys408, Cys436, Cys461, Glu495, and Lys497. Cys408 bears the Cysteine persulfide mark.

It belongs to the HCP family. [2Fe-2S] cluster is required as a cofactor. It depends on hybrid [4Fe-2O-2S] cluster as a cofactor.

It localises to the cytoplasm. The catalysed reaction is A + NH4(+) + H2O = hydroxylamine + AH2 + H(+). Functionally, catalyzes the reduction of hydroxylamine to form NH(3) and H(2)O. This Shewanella baltica (strain OS195) protein is Hydroxylamine reductase.